A 229-amino-acid chain; its full sequence is Prolactin (229 aa).

Residues 1 to 30 (MDKKGWSLKGSLLPLLLLVSDLLLCQSVAS) form the signal peptide. C34 and C41 are joined by a disulfide. Residues S56, S64, and S120 each carry the phosphoserine modification. Intrachain disulfides connect C88-C204 and C221-C229.

It belongs to the somatotropin/prolactin family. Interacts with PRLR.

The protein resides in the secreted. Prolactin acts primarily on the mammary gland by promoting lactation. This is Prolactin (PRL) from Ailuropoda melanoleuca (Giant panda).